Reading from the N-terminus, the 148-residue chain is uncharacterized protein (148 aa).

The span at 1–17 (MCPPVRQRPAQAPPAKR) shows a compositional bias: low complexity. Disordered regions lie at residues 1–86 (MCPP…VQSP) and 122–148 (RAHRLPQPKPPCLSRQRPSPDSQTSPC). Basic residues predominate over residues 38–57 (RPPKMQRRPRPPVAKRRRFP). Positions 137–148 (QRPSPDSQTSPC) are enriched in polar residues.

This sequence belongs to the Epstein-Barr virus BLLF2 family.

This is an uncharacterized protein from Epstein-Barr virus (strain AG876) (HHV-4).